We begin with the raw amino-acid sequence, 351 residues long: UDP-N-acetylglucosamine--N-acetylmuramyl-(pentapeptide) pyrophosphoryl-undecaprenol N-acetylglucosamine transferase (351 aa).

UDP-N-acetyl-alpha-D-glucosamine is bound by residues 12 to 14 (TGG), asparagine 124, arginine 160, serine 188, isoleucine 239, 258 to 263 (ALTVCE), and glutamine 283.

The protein belongs to the glycosyltransferase 28 family. MurG subfamily.

The protein localises to the cell inner membrane. It catalyses the reaction di-trans,octa-cis-undecaprenyl diphospho-N-acetyl-alpha-D-muramoyl-L-alanyl-D-glutamyl-meso-2,6-diaminopimeloyl-D-alanyl-D-alanine + UDP-N-acetyl-alpha-D-glucosamine = di-trans,octa-cis-undecaprenyl diphospho-[N-acetyl-alpha-D-glucosaminyl-(1-&gt;4)]-N-acetyl-alpha-D-muramoyl-L-alanyl-D-glutamyl-meso-2,6-diaminopimeloyl-D-alanyl-D-alanine + UDP + H(+). The protein operates within cell wall biogenesis; peptidoglycan biosynthesis. Its function is as follows. Cell wall formation. Catalyzes the transfer of a GlcNAc subunit on undecaprenyl-pyrophosphoryl-MurNAc-pentapeptide (lipid intermediate I) to form undecaprenyl-pyrophosphoryl-MurNAc-(pentapeptide)GlcNAc (lipid intermediate II). This is UDP-N-acetylglucosamine--N-acetylmuramyl-(pentapeptide) pyrophosphoryl-undecaprenol N-acetylglucosamine transferase from Actinobacillus pleuropneumoniae serotype 5b (strain L20).